The primary structure comprises 81 residues: Toxin TdNa10 (81 aa).

The signal sequence occupies residues 1–20; it reads MWTFAIVLAFLLIGLDEGEA. The LCN-type CS-alpha/beta domain maps to 21–81; that stretch reads LDGYPLSKNN…KMYPGELPCH (61 aa). Cystine bridges form between C32/C80, C36/C57, C42/C62, and C46/C64.

It belongs to the long (4 C-C) scorpion toxin superfamily. Sodium channel inhibitor family. Beta subfamily. Expressed by the venom gland.

The protein resides in the secreted. Alpha toxins bind voltage-independently at site-3 of sodium channels (Nav) and inhibit the inactivation of the activated channels, thereby blocking neuronal transmission. This toxin binds, in vitro, to sodium channels and inhibits the inactivation of the activated channels. Seems not toxic to mice, crickets and sweet-water shrimps. This is Toxin TdNa10 from Tityus discrepans (Venezuelan scorpion).